A 59-amino-acid polypeptide reads, in one-letter code: UPF0434 protein lpl1884 (59 aa).

It belongs to the UPF0434 family.

This Legionella pneumophila (strain Lens) protein is UPF0434 protein lpl1884.